A 127-amino-acid polypeptide reads, in one-letter code: Phosphoribosyl-AMP cyclohydrolase (127 aa).

D78 serves as a coordination point for Mg(2+). Residue C79 participates in Zn(2+) binding. Positions 80 and 82 each coordinate Mg(2+). Residues C95 and C102 each coordinate Zn(2+).

It belongs to the PRA-CH family. Homodimer. The cofactor is Mg(2+). It depends on Zn(2+) as a cofactor.

It localises to the cytoplasm. It carries out the reaction 1-(5-phospho-beta-D-ribosyl)-5'-AMP + H2O = 1-(5-phospho-beta-D-ribosyl)-5-[(5-phospho-beta-D-ribosylamino)methylideneamino]imidazole-4-carboxamide. Its pathway is amino-acid biosynthesis; L-histidine biosynthesis; L-histidine from 5-phospho-alpha-D-ribose 1-diphosphate: step 3/9. Catalyzes the hydrolysis of the adenine ring of phosphoribosyl-AMP. In Salinibacter ruber (strain DSM 13855 / M31), this protein is Phosphoribosyl-AMP cyclohydrolase.